A 476-amino-acid chain; its full sequence is MNSLIEQQVAEIGIEAYLDQHHHKSLLRFLTCGSVDDGKSTLIGRLLHDSHQIYEDQLAAIYTDSQKVGTTGDKPDLALLVDGLQAEREQGITIDVAYRYFSTKKRKFIIADTPGHEQYTRNMATGASTCDVAVILIDARKGVLDQTRRHSYIASLLGIRHFIVAINKMDLVGFDEERFTSIRDEYLEFAEKLNKNIEIKLVPLSALDGDNVVSLSEQTPWYKGDSLLTLLEDVDFVQEQESSDFRFPVQYVNRPNLDFRGFAGTIASGLVKVGDKVKALPSGKMSTIDRIVTFDGDLPEAYSGQAITLTLKDEIDISRGDTIVAADDDVPLSHNLLADIVWMAEAPLEVGRQYDIKVAGKKTVGSVQGIRHQVDINNLETFTTETLPLNGIGLCEVVLNEAIAVDAYQNSIDTGGFIIIDRLTNVTVGAGMVREALIDKTVVSTGDFSAFEIEFNALVRKHFPHWNADDISKLLG.

The 218-residue stretch at 24–241 (KSLLRFLTCG…EDVDFVQEQE (218 aa)) folds into the tr-type G domain. Residues 33–40 (GSVDDGKS) are G1. Residue 33-40 (GSVDDGKS) coordinates GTP. The segment at 91–95 (GITID) is G2. Residues 112–115 (DTPG) are G3. GTP contacts are provided by residues 112–116 (DTPGH) and 167–170 (NKMD). The G4 stretch occupies residues 167 to 170 (NKMD). Residues 205–207 (SAL) are G5.

It belongs to the TRAFAC class translation factor GTPase superfamily. Classic translation factor GTPase family. CysN/NodQ subfamily. In terms of assembly, heterodimer composed of CysD, the smaller subunit, and CysN.

It catalyses the reaction sulfate + ATP + H(+) = adenosine 5'-phosphosulfate + diphosphate. It functions in the pathway sulfur metabolism; hydrogen sulfide biosynthesis; sulfite from sulfate: step 1/3. Its function is as follows. With CysD forms the ATP sulfurylase (ATPS) that catalyzes the adenylation of sulfate producing adenosine 5'-phosphosulfate (APS) and diphosphate, the first enzymatic step in sulfur assimilation pathway. APS synthesis involves the formation of a high-energy phosphoric-sulfuric acid anhydride bond driven by GTP hydrolysis by CysN coupled to ATP hydrolysis by CysD. The sequence is that of Sulfate adenylyltransferase subunit 1 from Photobacterium profundum (strain SS9).